We begin with the raw amino-acid sequence, 390 residues long: 5-hydroxytryptamine receptor 1B (390 aa).

Residues Met1 to Leu46 lie on the Extracellular side of the membrane. Asn24 and Asn32 each carry an N-linked (GlcNAc...) asparagine glycan. The chain crosses the membrane as a helical span at residues Pro47–Ala72. Over Thr73–Tyr86 the chain is Cytoplasmic. A helical membrane pass occupies residues Leu87 to Val111. Over Thr112–Gln119 the chain is Extracellular. The helical transmembrane segment at Val120–Leu145 threads the bilayer. The cysteines at positions 122 and 199 are disulfide-linked. The ergotamine site is built by Asp129 and Thr134. A DRY motif; important for ligand-induced conformation changes and signaling motif is present at residues Asp146–Tyr148. Over Asp146–Arg165 the chain is Cytoplasmic. The chain crosses the membrane as a helical span at residues Ala166 to Pro184. Over Phe185 to His205 the chain is Extracellular. Val201 provides a ligand contact to ergotamine. The chain crosses the membrane as a helical span at residues Ile206–Gly229. The Cytoplasmic portion of the chain corresponds to Arg230–Thr315. Polar residues predominate over residues Asp259–Ser272. The interval Asp259–Ser281 is disordered. Residues Leu316–Met337 form a helical membrane-spanning segment. Residues Pro338–His347 lie on the Extracellular side of the membrane. Residues Leu348–Thr370 form a helical membrane-spanning segment. An NPxxY motif; important for ligand-induced conformation changes and signaling motif is present at residues Asn365–Tyr369. The Cytoplasmic portion of the chain corresponds to Met371–Ser390. Residue Cys388 is the site of S-palmitoyl cysteine attachment.

The protein belongs to the G-protein coupled receptor 1 family. As to quaternary structure, homodimer. Heterodimer with HTR1D. In terms of processing, phosphorylated. Desensitization of the receptor may be mediated by its phosphorylation. Palmitoylated.

The protein localises to the cell membrane. Its function is as follows. G-protein coupled receptor for 5-hydroxytryptamine (serotonin). Also functions as a receptor for ergot alkaloid derivatives, various anxiolytic and antidepressant drugs and other psychoactive substances, such as lysergic acid diethylamide (LSD). Ligand binding causes a conformation change that triggers signaling via guanine nucleotide-binding proteins (G proteins) and modulates the activity of downstream effectors, such as adenylate cyclase. HTR1B is coupled to G(i)/G(o) G alpha proteins and mediates inhibitory neurotransmission by inhibiting adenylate cyclase activity. Arrestin family members inhibit signaling via G proteins and mediate activation of alternative signaling pathways. Regulates the release of 5-hydroxytryptamine, dopamine and acetylcholine in the brain, and thereby affects neural activity, nociceptive processing, pain perception, mood and behavior. Besides, plays a role in vasoconstriction of cerebral arteries. The polypeptide is 5-hydroxytryptamine receptor 1B (HTR1B) (Gorilla gorilla gorilla (Western lowland gorilla)).